The sequence spans 692 residues: MARKTPLNRIRNIGIAAHIDAGKTTTSERILFYTGVSHKIGEVHDGAATMDWMEQEKERGITITSAATTCFWKDHQINLIDTPGHVDFTIEVERSMRVLDGAVSVFCSVGGVQPQSETVWRQANKYGVPRIVFVNKMDRIGANFYSVENQIKQRLKANPVPINIPIGAEDTFIGVIDLVQMKAIVWNNETMGAKYDVEEIPSDLLEKAKQYREKLVEAVAEQDEALMEKYLGGEELSIEEIKKGIKTGCLNMSLVPMLCGSSFKNKGVQTLLDAVIDYLPAPTEVVDIKGIDPKTEEEVFVKSSDDGEFAGLAFKIMTDPFVGQLTFVRVYRGNLESGSYVYNSTKDKKERVGRLLKMHSNKREDIKEVYAGEICAFVGLKDTLTGDTLCDEKNAVVLERMEFPEPVIHIAVEPKTKADQEKMGVALGKLAEEDPSFRVMTQEETGQTLIGGMGELHLEIIVDRLKREFKVEAEIGQPQVAFRETIRSSVSKEHKYAKQSGGRGQYGHVFIKLEPKEPGSGYEFVNEISGGVIPKEYIPAVDKGIQEAMQNGVLAGYPVVDFKVTLYDGSYHDVDSSEMAFKIAGSMAFKEASRAANPVLLEPMMKVEVEVPEEYMGDVIGDLNRRRGQINSMDDRLGLKIVNAFVPLVEMFGYSTDLRSATQGRGTYSMEFDHYGEVPSNIAKEIVEKRKG.

The 276-residue stretch at 8–283 (NRIRNIGIAA…AVIDYLPAPT (276 aa)) folds into the tr-type G domain. GTP contacts are provided by residues 17–24 (AHIDAGKT), 81–85 (DTPGH), and 135–138 (NKMD).

This sequence belongs to the TRAFAC class translation factor GTPase superfamily. Classic translation factor GTPase family. EF-G/EF-2 subfamily.

It localises to the cytoplasm. Catalyzes the GTP-dependent ribosomal translocation step during translation elongation. During this step, the ribosome changes from the pre-translocational (PRE) to the post-translocational (POST) state as the newly formed A-site-bound peptidyl-tRNA and P-site-bound deacylated tRNA move to the P and E sites, respectively. Catalyzes the coordinated movement of the two tRNA molecules, the mRNA and conformational changes in the ribosome. The chain is Elongation factor G from Helicobacter pylori (strain Shi470).